A 222-amino-acid chain; its full sequence is 7-cyano-7-deazaguanine synthase (222 aa).

8–18 (LSGGMDSTTAA) contacts ATP. Zn(2+) contacts are provided by C187, C195, C198, and C201.

This sequence belongs to the QueC family. Requires Zn(2+) as cofactor.

The enzyme catalyses 7-carboxy-7-deazaguanine + NH4(+) + ATP = 7-cyano-7-deazaguanine + ADP + phosphate + H2O + H(+). The protein operates within purine metabolism; 7-cyano-7-deazaguanine biosynthesis. Its function is as follows. Catalyzes the ATP-dependent conversion of 7-carboxy-7-deazaguanine (CDG) to 7-cyano-7-deazaguanine (preQ(0)). This Nautilia profundicola (strain ATCC BAA-1463 / DSM 18972 / AmH) protein is 7-cyano-7-deazaguanine synthase.